The sequence spans 668 residues: RING finger protein 214 (668 aa).

Disordered regions lie at residues 1-87 (MAAS…AHEE) and 103-125 (NGSQ…TSLR). A2 carries the N-acetylalanine modification. 4 positions are modified to phosphoserine: S15, S40, S48, and S54. A compositionally biased stretch (polar residues) spans 43–59 (KQKNLSPPSVSSQMITK). Basic and acidic residues predominate over residues 60 to 71 (ESNRNAHLEHPE). S196 is subject to Phosphoserine. Residues 220–379 (QDIEKNLDKM…AEKEAELHLT (160 aa)) are a coiled coil. The tract at residues 486–552 (FPILNPALSQ…SSETPRPQPV (67 aa)) is disordered. Phosphoserine is present on residues S497, S511, and S516. A compositionally biased stretch (pro residues) spans 523-536 (PHMPPAASIPPPPG). Residues 623–665 (CLMCQKLVQPSELHPMACTHALHKECIKFWAQTNTNDTCPFCP) form an RING-type; atypical zinc finger.

The chain is RING finger protein 214 (Rnf214) from Mus musculus (Mouse).